A 65-amino-acid polypeptide reads, in one-letter code: Putative primary metabolism protein prl65 (65 aa).

A disordered region spans residues Met-1–Thr-25.

Its function is as follows. May play a role in primary metabolism. The protein is Putative primary metabolism protein prl65 of Schizosaccharomyces pombe (strain 972 / ATCC 24843) (Fission yeast).